The chain runs to 301 residues: GTPase Era (301 aa).

The 168-residue stretch at 6–173 (KSGFVAIVGR…LEQTNANLEI (168 aa)) folds into the Era-type G domain. Residues 14 to 21 (GRPNVGKS) form a G1 region. Residue 14 to 21 (GRPNVGKS) participates in GTP binding. The segment at 40–44 (QTTRN) is G2. Positions 61 to 64 (DTPG) are G3. Residues 61–65 (DTPGI) and 123–126 (NKID) each bind GTP. The tract at residues 123 to 126 (NKID) is G4. Residues 152 to 154 (ISA) are G5. The KH type-2 domain occupies 204-282 (TREEVPHSVA…FLEVWVKVQK (79 aa)).

This sequence belongs to the TRAFAC class TrmE-Era-EngA-EngB-Septin-like GTPase superfamily. Era GTPase family. As to quaternary structure, monomer.

The protein localises to the cytoplasm. The protein resides in the cell membrane. Functionally, an essential GTPase that binds both GDP and GTP, with rapid nucleotide exchange. Plays a role in 16S rRNA processing and 30S ribosomal subunit biogenesis and possibly also in cell cycle regulation and energy metabolism. This Listeria monocytogenes serotype 4a (strain HCC23) protein is GTPase Era.